The primary structure comprises 682 residues: Penicillin-binding protein activator LpoA (682 aa).

Residues 1–26 (MLSSITVRTKSGRLIPLVLAATLLAA) form the signal peptide. Cys-27 carries N-palmitoyl cysteine lipidation. Cys-27 carries the S-diacylglycerol cysteine lipid modification.

It belongs to the LpoA family. Interacts with PBP1a.

It is found in the cell outer membrane. Regulator of peptidoglycan synthesis that is essential for the function of penicillin-binding protein 1A (PBP1a). The polypeptide is Penicillin-binding protein activator LpoA (Edwardsiella ictaluri (strain 93-146)).